Here is an 80-residue protein sequence, read N- to C-terminus: Cell division protein ZapB (80 aa).

Residues 3–80 (FEVLEQLESK…ALLGKMDEVE (78 aa)) are a coiled coil. Residues 41–53 (ANELRSQREELEQ) show a composition bias toward basic and acidic residues. The segment at 41–60 (ANELRSQREELEQKSQQAQQ) is disordered.

This sequence belongs to the ZapB family. In terms of assembly, homodimer. The ends of the coiled-coil dimer bind to each other, forming polymers. Interacts with FtsZ.

The protein resides in the cytoplasm. Non-essential, abundant cell division factor that is required for proper Z-ring formation. It is recruited early to the divisome by direct interaction with FtsZ, stimulating Z-ring assembly and thereby promoting cell division earlier in the cell cycle. Its recruitment to the Z-ring requires functional FtsA or ZipA. The chain is Cell division protein ZapB from Vibrio campbellii (strain ATCC BAA-1116).